The sequence spans 159 residues: uncharacterized protein (159 aa).

Transmembrane regions (helical) follow at residues 59–79 and 91–113; these read IGAL…ALVY and VFSV…RRVC.

It localises to the cell membrane. This is an uncharacterized protein from Treponema pallidum (strain Nichols).